Here is a 94-residue protein sequence, read N- to C-terminus: Protein RESPONSE TO LOW SULFUR 2 (94 aa).

A coiled-coil region spans residues 15 to 63 (VDELRRKNGEMEKAVEEMKKEMLQLWRRTQVAEEAEERLCSQLAELEAE).

Its function is as follows. May be involved in defense responses monitoring. Probably implicated into osmotic stress signaling. The sequence is that of Protein RESPONSE TO LOW SULFUR 2 from Arabidopsis thaliana (Mouse-ear cress).